We begin with the raw amino-acid sequence, 242 residues long: Demethylmenaquinone methyltransferase (242 aa).

S-adenosyl-L-methionine-binding positions include Thr-62, Asp-83, and 112–113; that span reads DV.

The protein belongs to the class I-like SAM-binding methyltransferase superfamily. MenG/UbiE family.

It carries out the reaction a 2-demethylmenaquinol + S-adenosyl-L-methionine = a menaquinol + S-adenosyl-L-homocysteine + H(+). The protein operates within quinol/quinone metabolism; menaquinone biosynthesis; menaquinol from 1,4-dihydroxy-2-naphthoate: step 2/2. Functionally, methyltransferase required for the conversion of demethylmenaquinol (DMKH2) to menaquinol (MKH2). The sequence is that of Demethylmenaquinone methyltransferase from Protochlamydia amoebophila (strain UWE25).